We begin with the raw amino-acid sequence, 240 residues long: Uridylate kinase (240 aa).

14–17 (KLSG) is a binding site for ATP. Gly56 provides a ligand contact to UMP. Residues Gly57 and Arg61 each coordinate ATP. UMP is bound by residues Asp76 and 137 to 144 (TGNPFFTT). ATP-binding residues include Thr164, Tyr170, and Asp173.

It belongs to the UMP kinase family. In terms of assembly, homohexamer.

It is found in the cytoplasm. It catalyses the reaction UMP + ATP = UDP + ADP. It participates in pyrimidine metabolism; CTP biosynthesis via de novo pathway; UDP from UMP (UMPK route): step 1/1. Its activity is regulated as follows. Inhibited by UTP. In terms of biological role, catalyzes the reversible phosphorylation of UMP to UDP. This chain is Uridylate kinase, found in Acidovorax sp. (strain JS42).